The sequence spans 1015 residues: SPOC domain-containing protein 1 (1015 aa).

Disordered stretches follow at residues 73 to 97 (MVSP…SPVL), 118 to 159 (GFSL…EPGG), 213 to 320 (LYPE…PRLE), and 344 to 406 (AASS…MTPL). Residues 304 to 320 (SQDHAEGASKKDFPRLE) are compositionally biased toward basic and acidic residues. Positions 373–382 (AHPTPCQSDP) are enriched in polar residues. A compositionally biased stretch (basic and acidic residues) spans 388-397 (AEPHQQRAED). The TFIIS central domain maps to 410–530 (VRSTVVRAMQ…IIEQQQKELY (121 aa)). Positions 643–685 (IQKAPGPAPASSPEVLKVGETPPKEPQDRLQMPAGLKNAPPSP) are disordered. In terms of domain architecture, SPOC spans 688–791 (WEGSLDMFSI…VQQVKMVLLP (104 aa)). 2 disordered regions span residues 858-906 (PEDR…PGWG) and 967-1015 (QSQD…EHEC). Positions 967-978 (QSQDSLPPSTVV) are enriched in polar residues.

As to quaternary structure, interacts with DNMT3A, DNMT3C and DNMT3L. Interacts with C19orf84 homolog. Interacts with SPIN1; promoting recruitment to transposons marked with histone H3 trimethylated at both 'Lys-4' and 'Lys-9' (H3K4me3K9me3).

It is found in the nucleus. It localises to the chromosome. In terms of biological role, protein adapter that acts as an essential executor of PIWIL4-piRNA pathway directed transposon DNA methylation and silencing in the male embryonic germ cells. Recruited to young transposons, which are specifically marked with histone H3 trimethylated at both 'Lys-4' and 'Lys-9' (H3K4me3K9me3), via its association with SPIN1 chromatin reader, and associates with the de novo DNA methylation machinery and repressive chromatin remodeling complexes. Following this, PIWIL4 engages with nascent transposable element transcript to direct piRNA-directed DNA methylation. Not required for piRNA biosynthesis. This chain is SPOC domain-containing protein 1, found in Mus musculus (Mouse).